The primary structure comprises 460 residues: Proton extrusion protein PxcA (460 aa).

Disordered stretches follow at residues 82–128 and 143–190; these read FSRL…QRRD and SRYK…GSGN. A compositionally biased stretch (polar residues) spans 90 to 102; sequence QNGSGPTSAQDKA. Residues 107 to 120 are compositionally biased toward low complexity; it reads AAEANVSESSSENS. The span at 151–163 shows a compositional bias: polar residues; that stretch reads KSQPISASISTSP. A compositionally biased stretch (low complexity) spans 171-184; the sequence is QPTSTQPSSSNVSV. A run of 4 helical transmembrane segments spans residues 242–262, 337–357, 373–393, and 420–440; these read FLLL…NFLF, GLKN…LIFV, IYGL…DVFV, and FIYG…KYWI.

The protein belongs to the CemA family.

It is found in the cell inner membrane. Its function is as follows. Required for H(+) efflux immediately after light irradiation to form a rapid H(+) concentration gradient across the thylakoid membranes. Together with PxcL, contributes to transient H(+) uptake following dark to light transition. The sequence is that of Proton extrusion protein PxcA from Synechococcus sp. (strain JA-2-3B'a(2-13)) (Cyanobacteria bacterium Yellowstone B-Prime).